The primary structure comprises 423 residues: Putative transmembrane protein ORF103 (423 aa).

Residues 43 to 57 are compositionally biased toward basic and acidic residues; sequence EPKIEQEEPQQKPEV. The tract at residues 43–91 is disordered; it reads EPKIEQEEPQQKPEVVDVYSNETDKNEEEVSIITSEDEEEDEKGMLFKR. Positions 67-84 are enriched in acidic residues; the sequence is KNEEEVSIITSEDEEEDE. A run of 2 helical transmembrane segments spans residues 125-145 and 162-182; these read IIGI…VAVL and FSLC…GLAI. The disordered stretch occupies residues 253 to 282; it reads DESGSEVSSEDEESDQETLLRNRKMPTNSK. 2 consecutive transmembrane segments (helical) span residues 326–346 and 366–386; these read LISA…IVGS and IPTL…MCVL.

The protein localises to the host membrane. The sequence is that of Putative transmembrane protein ORF103 from Magallana gigas (Pacific oyster).